We begin with the raw amino-acid sequence, 257 residues long: Large ribosomal subunit protein uL3 (257 aa).

Residues 232-257 (LKAPKKQKTKVETNQVNPKIEEEKTK) are disordered.

The protein belongs to the universal ribosomal protein uL3 family. As to quaternary structure, part of the 50S ribosomal subunit. Forms a cluster with proteins L14 and L19.

Functionally, one of the primary rRNA binding proteins, it binds directly near the 3'-end of the 23S rRNA, where it nucleates assembly of the 50S subunit. This Mycoplasma genitalium (strain ATCC 33530 / DSM 19775 / NCTC 10195 / G37) (Mycoplasmoides genitalium) protein is Large ribosomal subunit protein uL3.